Reading from the N-terminus, the 485-residue chain is 4-alpha-glucanotransferase (485 aa).

Belongs to the disproportionating enzyme family.

It localises to the cytoplasm. It catalyses the reaction Transfers a segment of a (1-&gt;4)-alpha-D-glucan to a new position in an acceptor, which may be glucose or a (1-&gt;4)-alpha-D-glucan.. The polypeptide is 4-alpha-glucanotransferase (malQ) (Aquifex aeolicus (strain VF5)).